The sequence spans 401 residues: Tyrosine--tRNA ligase (401 aa).

The short motif at 43–52 (PTAPDLHLGH) is the 'HIGH' region element. The 'KMSKS' region signature appears at 227–231 (KMSKS). K230 contributes to the ATP binding site. One can recognise an S4 RNA-binding domain in the interval 338-399 (MAIGNVLKEA…GKRRFAKINL (62 aa)).

The protein belongs to the class-I aminoacyl-tRNA synthetase family. TyrS type 2 subfamily. In terms of assembly, homodimer.

It is found in the cytoplasm. The catalysed reaction is tRNA(Tyr) + L-tyrosine + ATP = L-tyrosyl-tRNA(Tyr) + AMP + diphosphate + H(+). Its function is as follows. Catalyzes the attachment of tyrosine to tRNA(Tyr) in a two-step reaction: tyrosine is first activated by ATP to form Tyr-AMP and then transferred to the acceptor end of tRNA(Tyr). The polypeptide is Tyrosine--tRNA ligase (Idiomarina loihiensis (strain ATCC BAA-735 / DSM 15497 / L2-TR)).